The primary structure comprises 327 residues: tRNA U34 carboxymethyltransferase (327 aa).

Residues K91, W105, K110, G130, 181 to 182, M196, Y200, and R315 each bind carboxy-S-adenosyl-L-methionine; that span reads IE.

The protein belongs to the class I-like SAM-binding methyltransferase superfamily. CmoB family. As to quaternary structure, homotetramer.

It carries out the reaction carboxy-S-adenosyl-L-methionine + 5-hydroxyuridine(34) in tRNA = 5-carboxymethoxyuridine(34) in tRNA + S-adenosyl-L-homocysteine + H(+). Catalyzes carboxymethyl transfer from carboxy-S-adenosyl-L-methionine (Cx-SAM) to 5-hydroxyuridine (ho5U) to form 5-carboxymethoxyuridine (cmo5U) at position 34 in tRNAs. This chain is tRNA U34 carboxymethyltransferase, found in Pectobacterium atrosepticum (strain SCRI 1043 / ATCC BAA-672) (Erwinia carotovora subsp. atroseptica).